A 439-amino-acid polypeptide reads, in one-letter code: Ribulose bisphosphate carboxylase/oxygenase activase, chloroplastic (439 aa).

167–174 (GGKGQGKS) contributes to the ATP binding site.

It belongs to the RuBisCO activase family.

It localises to the plastid. The protein localises to the chloroplast stroma. In terms of biological role, activation of RuBisCO (ribulose-1,5-bisphosphate carboxylase/oxygenase; EC 4.1.1.39) involves the ATP-dependent carboxylation of the epsilon-amino group of lysine leading to a carbamate structure. The polypeptide is Ribulose bisphosphate carboxylase/oxygenase activase, chloroplastic (RCA) (Vigna radiata var. radiata (Mung bean)).